A 332-amino-acid chain; its full sequence is 4-hydroxyproline 2-epimerase 2 (332 aa).

C89 serves as the catalytic Proton acceptor. Substrate contacts are provided by residues H222, D248, and 253 to 254 (GT).

The protein belongs to the proline racemase family.

It carries out the reaction trans-4-hydroxy-L-proline = cis-4-hydroxy-D-proline. Its function is as follows. Catalyzes the epimerization of trans-4-hydroxy-L-proline (t4LHyp) to cis-4-hydroxy-D-proline (c4DHyp). Is likely involved in a degradation pathway that converts t4LHyp to alpha-ketoglutarate. Displays no proline racemase activity. The polypeptide is 4-hydroxyproline 2-epimerase 2 (Rhizobium rhizogenes (strain K84 / ATCC BAA-868) (Agrobacterium radiobacter)).